Reading from the N-terminus, the 472-residue chain is Fumarate hydratase class II (472 aa).

Residues 1–20 form a disordered region; sequence MSPHENPSVETRTESDTFGP. Residues 105–107, 136–139, 146–148, and Thr194 contribute to the substrate site; these read SGT, HPND, and SSN. Positions 127-149 are disordered; sequence GKRGGKSPVHPNDHCNRGQSSND. His195 (proton donor/acceptor) is an active-site residue. Residue Ser325 is part of the active site. Residues Ser326 and 331–333 contribute to the substrate site; that span reads KVN.

It belongs to the class-II fumarase/aspartase family. Fumarase subfamily. In terms of assembly, homotetramer.

The protein localises to the cytoplasm. The catalysed reaction is (S)-malate = fumarate + H2O. Its pathway is carbohydrate metabolism; tricarboxylic acid cycle; (S)-malate from fumarate: step 1/1. In terms of biological role, involved in the TCA cycle. Catalyzes the stereospecific interconversion of fumarate to L-malate. This is Fumarate hydratase class II from Methylorubrum extorquens (strain ATCC 14718 / DSM 1338 / JCM 2805 / NCIMB 9133 / AM1) (Methylobacterium extorquens).